A 2457-amino-acid polypeptide reads, in one-letter code: Highly reducing polyketide synthase ACTTS3 (2457 aa).

Positions 5 to 435 (REPIAVIGSA…GTNAHVILES (431 aa)) constitute a Ketosynthase family 3 (KS3) domain. Residues Cys-179, His-316, and His-356 each act as for beta-ketoacyl synthase activity in the active site. The interval 545-856 (RVLGIFTGQG…VMEAVLESSP (312 aa)) is malonyl-CoA:ACP transacylase (MAT) domain. Ser-641 serves as the catalytic For malonyltransferase activity. The N-terminal hotdog fold stretch occupies residues 938–1078 (HELLGRRTAD…GRIIIHLGSG (141 aa)). The dehydratase (DH) domain stretch occupies residues 938–1244 (HELLGRRTAD…LSLKSVAEPT (307 aa)). The PKS/mFAS DH domain occupies 938-1246 (HELLGRRTAD…LKSVAEPTEE (309 aa)). The active-site Proton acceptor; for dehydratase activity is His-970. The segment at 1091-1246 (TDLSPVDLDR…LKSVAEPTEE (156 aa)) is C-terminal hotdog fold. Residue Asp-1152 is the Proton donor; for dehydratase activity of the active site. A methyltransferase (CMet) domain region spans residues 1399-1587 (ETMNNCIARA…DVFYDFPDRS (189 aa)). The tract at residues 2085-2281 (FLPDKTYLMI…SDRHIENHLR (197 aa)) is ketoreductase (KR) domain. Residues 2374–2451 (DVTTVFQQAF…EISIDATKKY (78 aa)) form the Carrier domain. Ser-2411 carries the post-translational modification O-(pantetheine 4'-phosphoryl)serine.

Pantetheine 4'-phosphate serves as cofactor.

It functions in the pathway mycotoxin biosynthesis. In terms of biological role, highly reducing polyketide synthase; part of the gene clusters that mediate the biosynthesis of the host-selective toxins (HSTs) ACT-toxins responsible for brown spot of tangerine disease by the tangerine pathotype which affects tangerines and mandarins. ACT-toxins consist of three moieties, 9,10-epoxy-8-hydroxy-9-methyl-decatrienoic acid (EDA), valine and a polyketide. ACT-toxin I is toxic to both citrus and pear; toxin II the 5''-deoxy derivative of ACT-toxin I, is highly toxic to pear and slightly toxic to citrus. On cellular level, ACT-toxins affect plasma membrane of susceptible cells and cause a sudden increase in loss of K(+) after a few minutes of toxin treatment. The acyl-CoA ligase ACTT1, the hydrolase ACTT2, the enoyl-CoA hydratases ACTT3 and ACTT6, and the acyl-CoA synthetase ACTT5 are all involved in the biosynthesis of the AK-, AF- and ACT-toxin common 9,10-epoxy-8-hydroxy-9-methyl-decatrienoic acid (EDA) structural moiety. The exact role of each enzyme, and of additional enzymes identified within the AF-toxin clusters have still to be determined. On the other hand, ACTTS1 to ACTTS4 are specific to the tangerine pathotype. The function of ACTTS3 is to elongate the polyketide chain portion of ACT-toxin that is unique to this toxin. The enoyl-reductase ACTTS2 might complement the missing enoyl-reductase (ER) domain in ACTTS3 in the synthesis of the polyketide portion of ACT-toxin. The roles of the nonribosomal peptide synthetases-related proteins ACTTS1 and ACTTS4 have also still not been elucidated. This Alternaria alternata (Alternaria rot fungus) protein is Highly reducing polyketide synthase ACTTS3.